Here is a 152-residue protein sequence, read N- to C-terminus: Deoxyuridine 5'-triphosphate nucleotidohydrolase (152 aa).

Substrate is bound by residues Arg-72–Gly-74, Asn-85, Thr-89–Asp-91, and Lys-99.

Belongs to the dUTPase family. The cofactor is Mg(2+).

The enzyme catalyses dUTP + H2O = dUMP + diphosphate + H(+). Its pathway is pyrimidine metabolism; dUMP biosynthesis; dUMP from dCTP (dUTP route): step 2/2. Functionally, this enzyme is involved in nucleotide metabolism: it produces dUMP, the immediate precursor of thymidine nucleotides and it decreases the intracellular concentration of dUTP so that uracil cannot be incorporated into DNA. The sequence is that of Deoxyuridine 5'-triphosphate nucleotidohydrolase from Bradyrhizobium diazoefficiens (strain JCM 10833 / BCRC 13528 / IAM 13628 / NBRC 14792 / USDA 110).